A 113-amino-acid polypeptide reads, in one-letter code: 14 kDa zinc-binding protein (113 aa).

The 111-residue stretch at 3 to 113 (IFGKIISKEI…GGRQMNWPPG (111 aa)) folds into the HIT domain. The short motif at 97-101 (HIHVH) is the Histidine triad motif element.

In terms of assembly, homodimer.

This Brassica juncea (Indian mustard) protein is 14 kDa zinc-binding protein.